We begin with the raw amino-acid sequence, 229 residues long: Large ribosomal subunit protein uL1 (229 aa).

The protein belongs to the universal ribosomal protein uL1 family. Part of the 50S ribosomal subunit.

Its function is as follows. Binds directly to 23S rRNA. The L1 stalk is quite mobile in the ribosome, and is involved in E site tRNA release. Functionally, protein L1 is also a translational repressor protein, it controls the translation of the L11 operon by binding to its mRNA. The sequence is that of Large ribosomal subunit protein uL1 from Actinobacillus pleuropneumoniae serotype 5b (strain L20).